The primary structure comprises 327 residues: Probable cell division protein WhiA (327 aa).

The H-T-H motif DNA-binding region spans 275–308 (SLEELGRLADPPMTKDAVAGRIRRLLSMADRKAK). The tract at residues 304–327 (DRKAKQDGIPDTESAVTPDLLEDA) is disordered.

It belongs to the WhiA family.

In terms of biological role, involved in cell division and chromosome segregation. The protein is Probable cell division protein WhiA of Mycobacterium sp. (strain MCS).